A 108-amino-acid chain; its full sequence is DNA-binding protein HBbu (108 aa).

This sequence belongs to the bacterial histone-like protein family.

Functionally, histone-like DNA-binding protein which is capable of wrapping DNA to stabilize it, and thus to prevent its denaturation under extreme environmental conditions. The sequence is that of DNA-binding protein HBbu (hbb) from Borrelia turicatae.